The sequence spans 410 residues: Arginine deiminase (410 aa).

Cysteine 400 serves as the catalytic Amidino-cysteine intermediate.

This sequence belongs to the arginine deiminase family.

The protein localises to the cytoplasm. It catalyses the reaction L-arginine + H2O = L-citrulline + NH4(+). It functions in the pathway amino-acid degradation; L-arginine degradation via ADI pathway; carbamoyl phosphate from L-arginine: step 1/2. This is Arginine deiminase from Bacillus cereus (strain ATCC 10987 / NRS 248).